The chain runs to 557 residues: Beta-amylase 2, chloroplastic (557 aa).

Residues 1-38 (MMSLNLAHQTGAAAAVAPAAPRTAVVAAAAGTVSAPAV) constitute a chloroplast transit peptide. D135, H175, and D183 together coordinate substrate. E267 functions as the Proton donor in the catalytic mechanism. Substrate is bound by residues K380, H385, and T427. E465 (proton acceptor) is an active-site residue. Substrate contacts are provided by residues 466-467 (NA) and R499.

This sequence belongs to the glycosyl hydrolase 14 family.

It localises to the plastid. The protein localises to the chloroplast. The catalysed reaction is Hydrolysis of (1-&gt;4)-alpha-D-glucosidic linkages in polysaccharides so as to remove successive maltose units from the non-reducing ends of the chains.. Possesses beta-amylase activity in vitro. May be involved in cold resistance by mediating the accumulation of maltose upon freezing stress, thus contributing to the protection of membranes. This chain is Beta-amylase 2, chloroplastic, found in Oryza sativa subsp. japonica (Rice).